Reading from the N-terminus, the 907-residue chain is Phototropin-2 (907 aa).

The segment at alanine 28 to aspartate 84 is disordered. A compositionally biased stretch (polar residues) spans serine 41–alanine 51. The 74-residue stretch at valine 89 to glycine 162 folds into the PAS 1 domain. FMN contacts are provided by residues asparagine 138–glutamine 143, arginine 156, asparagine 171, asparagine 181, and glutamine 202. Cysteine 139 carries the S-4a-FMN cysteine modification. The PAC 1 domain maps to arginine 163 to methionine 217. Residues arginine 332 to serine 363 are disordered. The region spanning glutamine 375 to glutamine 448 is the PAS 2 domain. Residues asparagine 424–glutamine 429, arginine 442, asparagine 457, asparagine 467, and glutamine 488 each bind FMN. Cysteine 425 carries the post-translational modification S-4a-FMN cysteine. Residues lysine 449–serine 503 form the PAC 2 domain. Residues phenylalanine 576–phenylalanine 863 enclose the Protein kinase domain. ATP contacts are provided by residues leucine 582–valine 590 and lysine 605. Residue aspartate 701 is the Proton acceptor of the active site.

This sequence belongs to the protein kinase superfamily. Ser/Thr protein kinase family. In terms of assembly, homodimer. Requires FMN as cofactor. Post-translationally, autophosphorylated in response to blue light irradiation. In terms of processing, 2 molecules of FMN bind covalently to cysteines after exposure to blue light and are reversed in the dark. Expressed at low levels in leaves of dark-grown seedlings.

It carries out the reaction L-seryl-[protein] + ATP = O-phospho-L-seryl-[protein] + ADP + H(+). The catalysed reaction is L-threonyl-[protein] + ATP = O-phospho-L-threonyl-[protein] + ADP + H(+). Its function is as follows. Protein kinase that acts as a blue light photoreceptor in a signal-transduction pathway for phototropic responses. Regulates a wide range of physiological activities in plants that maximize the efficiency of photosynthesis, such as chloroplast relocations, stomata opening, and leaf expansion. The chain is Phototropin-2 (PHOT2) from Oryza sativa subsp. japonica (Rice).